Consider the following 369-residue polypeptide: Mannose-1-phosphate guanylyltransferase catalytic subunit beta (369 aa).

Residues 12-231 (RALILVGGYG…TGFWMDIGQP (220 aa)) form a substrate-binding domain region. Asp-120 is a GDP-alpha-D-mannose binding site. Asp-120 contacts Mg(2+). Lys-171 is a catalytic residue. Residue Asp-227 coordinates GDP-alpha-D-mannose. A Mg(2+)-binding site is contributed by Asp-227. Positions 254-369 (YTGPGVVGNV…ASVPEPQIIM (116 aa)) are hexapeptide repeat domain.

This sequence belongs to the transferase hexapeptide repeat family. In terms of assembly, component of the GMPPA-GMPPB mannose-1-phosphate guanylyltransferase complex composed of 4 Gmppa subunits and 8 Gmppb subunits; the complex is organized into three layers, a central layer made up of 2 Gmppa dimers sandwiched between two layers each made up of 2 Gmppb dimers. Gmppb catalytic activity is reduced when part of the complex and binding of GDP-alpha-D-Mannose by Gmppa induces allosteric feedback inhibition of Gmppb. It depends on Mg(2+) as a cofactor.

It carries out the reaction alpha-D-mannose 1-phosphate + GTP + H(+) = GDP-alpha-D-mannose + diphosphate. It functions in the pathway nucleotide-sugar biosynthesis; GDP-alpha-D-mannose biosynthesis; GDP-alpha-D-mannose from alpha-D-mannose 1-phosphate (GTP route): step 1/1. Its activity is regulated as follows. Enzyme activity is reduced by incorporation into the GMPPA-GMPPB mannose-1-phosphate guanylyltransferase complex. Allosterically inhibited, when part of the GMPPA-GMPPB complex, by GDP-alpha-D-mannose binding to Gmppa. Catalytic subunit of the GMPPA-GMPPB mannose-1-phosphate guanylyltransferase complex. Catalyzes the formation of GDP-mannose, an essential precursor of glycan moieties of glycoproteins and glycolipids. Can catalyze the reverse reaction in vitro. Together with GMPPA regulates GDP-alpha-D-mannose levels. This is Mannose-1-phosphate guanylyltransferase catalytic subunit beta from Drosophila melanogaster (Fruit fly).